The chain runs to 117 residues: Holo-[acyl-carrier-protein] synthase (117 aa).

Positions 6 and 55 each coordinate Mg(2+).

It belongs to the P-Pant transferase superfamily. AcpS family. The cofactor is Mg(2+).

It is found in the cytoplasm. The enzyme catalyses apo-[ACP] + CoA = holo-[ACP] + adenosine 3',5'-bisphosphate + H(+). Its function is as follows. Transfers the 4'-phosphopantetheine moiety from coenzyme A to a Ser of acyl-carrier-protein. The polypeptide is Holo-[acyl-carrier-protein] synthase (Chlorobaculum parvum (strain DSM 263 / NCIMB 8327) (Chlorobium vibrioforme subsp. thiosulfatophilum)).